Consider the following 465-residue polypeptide: ATP synthase subunit beta (465 aa).

An ATP-binding site is contributed by 152–159 (GGAGVGKT).

This sequence belongs to the ATPase alpha/beta chains family. In terms of assembly, F-type ATPases have 2 components, CF(1) - the catalytic core - and CF(0) - the membrane proton channel. CF(1) has five subunits: alpha(3), beta(3), gamma(1), delta(1), epsilon(1). CF(0) has three main subunits: a(1), b(2) and c(9-12). The alpha and beta chains form an alternating ring which encloses part of the gamma chain. CF(1) is attached to CF(0) by a central stalk formed by the gamma and epsilon chains, while a peripheral stalk is formed by the delta and b chains.

The protein resides in the cell inner membrane. The catalysed reaction is ATP + H2O + 4 H(+)(in) = ADP + phosphate + 5 H(+)(out). Functionally, produces ATP from ADP in the presence of a proton gradient across the membrane. The catalytic sites are hosted primarily by the beta subunits. The polypeptide is ATP synthase subunit beta (Campylobacter jejuni subsp. jejuni serotype O:6 (strain 81116 / NCTC 11828)).